The sequence spans 180 residues: Putative protein 33K (180 aa).

A disordered region spans residues 31–108; sequence LEEAYKQLEK…AKAPRNYGTP (78 aa). A compositionally biased stretch (basic and acidic residues) spans 33–43; it reads EAYKQLEKELG. Residues 60-78 are compositionally biased toward acidic residues; the sequence is PLSEGELEEISEEEEEEGE.

This is Putative protein 33K from Pantherophis guttatus (Corn snake).